A 397-amino-acid polypeptide reads, in one-letter code: Keratinocyte differentiation factor 1 (397 aa).

The segment covering 1–16 (MPRPGQPRPSSGPPRL) has biased composition (pro residues). Disordered stretches follow at residues 1-67 (MPRP…SAEP), 130-158 (EHNG…MGSS), and 192-214 (LAEP…RGSE). Residues 44–55 (RPDPKDPGHHGP) show a composition bias toward basic and acidic residues. A compositionally biased stretch (polar residues) spans 201 to 211 (SLPSTFTNSPR). The residue at position 218 (Ser-218) is a Phosphoserine. 2 disordered regions span residues 304-339 (ISTR…TMLG) and 361-392 (ARKL…GAPL). Residues 321–330 (ARSTAPAAAP) show a composition bias toward low complexity. Polar residues predominate over residues 375–388 (SQDSSFQGTDTDSS).

The protein localises to the cytoplasm. The protein resides in the cell junction. Functionally, plays a role in the regulation of the epidermis formation during early development. Required both as an inhibitor of basal cell proliferation and a promoter of differentiation of basal progenitor cell progeny. The polypeptide is Keratinocyte differentiation factor 1 (Kdf1) (Mus musculus (Mouse)).